A 426-amino-acid chain; its full sequence is MSILGIVVEYNPFHNGHLFHLKKAKELINPDLTIAVMSGNFVQRGEPAIMDNYSRAEIALKAGIDIVVQLPVVYSVQDAGGFALGSVWTLSLLGVTDIVFGSETGNMKLLDVLSDILIEEPTVYVKLLKQHLKTGLSFPNARKAALKDYLKLHLSDFAESIQEIERSNNILGLEYLRAIKQIRSDITPHSIVRTGADYNDPYFKGRFSSATAIRKLIITGQWEKVKQAVPDYSYAIIKRECALKKCPVHLEKMGRFILGLLRRLDREDFKNYYGFTEGLDARFVRCSRQCGEISEFLECVKAKRFTFTRLKRLLMNVILKLSPKLIEQSNKQGPQYIRVLGFNENGRSHLSRIKKKLKVPLLTTPSTWKRVMYKAISGDFEIDQDLFQLQMKRDIMAADIYSLFFDDVKVIKASNEMKRRIIYIRG.

ATP-binding positions include 7-20 (VVEY…HLFH), glycine 101, asparagine 168, and arginine 193.

It belongs to the TmcAL family.

The protein resides in the cytoplasm. It carries out the reaction cytidine(34) in elongator tRNA(Met) + acetate + ATP = N(4)-acetylcytidine(34) in elongator tRNA(Met) + AMP + diphosphate. In terms of biological role, catalyzes the formation of N(4)-acetylcytidine (ac(4)C) at the wobble position of elongator tRNA(Met), using acetate and ATP as substrates. First activates an acetate ion to form acetyladenylate (Ac-AMP) and then transfers the acetyl group to tRNA to form ac(4)C34. This Kosmotoga olearia (strain ATCC BAA-1733 / DSM 21960 / TBF 19.5.1) protein is tRNA(Met) cytidine acetate ligase.